The following is a 164-amino-acid chain: Lipoprotein signal peptidase (164 aa).

4 helical membrane-spanning segments follow: residues 2 to 22, 40 to 60, 70 to 90, and 99 to 119; these read MSLL…AIVL, VVIT…AFSF, WLFS…MAKA, and LAYS…VVYG. Catalysis depends on residues Asp-123 and Asp-142. Residues 138–158 form a helical membrane-spanning segment; sequence FNVADMAISCGAVFIILDGFI.

This sequence belongs to the peptidase A8 family.

It is found in the cell inner membrane. The enzyme catalyses Release of signal peptides from bacterial membrane prolipoproteins. Hydrolyzes -Xaa-Yaa-Zaa-|-(S,diacylglyceryl)Cys-, in which Xaa is hydrophobic (preferably Leu), and Yaa (Ala or Ser) and Zaa (Gly or Ala) have small, neutral side chains.. The protein operates within protein modification; lipoprotein biosynthesis (signal peptide cleavage). In terms of biological role, this protein specifically catalyzes the removal of signal peptides from prolipoproteins. The chain is Lipoprotein signal peptidase from Tolumonas auensis (strain DSM 9187 / NBRC 110442 / TA 4).